The chain runs to 65 residues: Small ribosomal subunit protein uS10 (65 aa).

This sequence belongs to the universal ribosomal protein uS10 family. Part of the 30S ribosomal subunit.

Its function is as follows. Involved in the binding of tRNA to the ribosomes. This Desulfurococcus mucosus (Desulfurococcus mobilis) protein is Small ribosomal subunit protein uS10 (rps10).